The chain runs to 168 residues: Disulfide bond formation protein B 1 (168 aa).

Over 1–14 the chain is Cytoplasmic; the sequence is MNEQTSRLNRERRF. A helical membrane pass occupies residues 15 to 31; sequence LVLLGLICLSLIGGALY. The Periplasmic segment spans residues 32–49; it reads MQVVLGEAPCPLCILQRY. A disulfide bridge connects residues Cys-41 and Cys-44. Residues 50–65 traverse the membrane as a helical segment; the sequence is ALLFIAVFAFIAAAMP. Residues 66–72 lie on the Cytoplasmic side of the membrane; sequence GRRSLTF. A helical transmembrane segment spans residues 73-89; the sequence is FEALVVLSAIGGIVAAG. Topologically, residues 90-144 are periplasmic; sequence NHVYILANPMVSCGIDTLQPIVDDLPLAKLWPLAFQVDGFCSTPYPPILGLSLAQ. Cys-102 and Cys-130 form a disulfide bridge. The helical transmembrane segment at 145-163 threads the bilayer; sequence WALVAFVLTAVLVPLGIYR. At 164-168 the chain is on the cytoplasmic side; the sequence is NRRQA.

Belongs to the DsbB family.

The protein localises to the cell inner membrane. Functionally, required for disulfide bond formation in some periplasmic proteins. Acts by oxidizing the DsbA protein. The sequence is that of Disulfide bond formation protein B 1 (dsbB1) from Pseudomonas putida (strain ATCC 47054 / DSM 6125 / CFBP 8728 / NCIMB 11950 / KT2440).